The sequence spans 724 residues: Acyl-coenzyme A oxidase 2 (724 aa).

Residues 1–23 (MALISNLKDEYDHPTKTDPDTNP) form a disordered region. The segment covering 7-21 (LKDEYDHPTKTDPDT) has biased composition (basic and acidic residues).

The protein belongs to the acyl-CoA oxidase family. FAD serves as cofactor.

It is found in the peroxisome. It catalyses the reaction a 2,3-saturated acyl-CoA + O2 = a (2E)-enoyl-CoA + H2O2. Its pathway is lipid metabolism; peroxisomal fatty acid beta-oxidation. The sequence is that of Acyl-coenzyme A oxidase 2 (POX2) from Candida maltosa (Yeast).